Reading from the N-terminus, the 446-residue chain is Phosphoglucosamine mutase (446 aa).

The active-site Phosphoserine intermediate is serine 103. Mg(2+)-binding residues include serine 103, aspartate 242, aspartate 244, and aspartate 246. Phosphoserine is present on serine 103.

The protein belongs to the phosphohexose mutase family. Requires Mg(2+) as cofactor. In terms of processing, activated by phosphorylation.

It catalyses the reaction alpha-D-glucosamine 1-phosphate = D-glucosamine 6-phosphate. Its function is as follows. Catalyzes the conversion of glucosamine-6-phosphate to glucosamine-1-phosphate. The sequence is that of Phosphoglucosamine mutase from Vibrio cholerae serotype O1 (strain ATCC 39541 / Classical Ogawa 395 / O395).